The sequence spans 118 residues: Large ribosomal subunit protein uL18 (118 aa).

Residues 1–24 (MISKPDKNKIRQKRHRRVRGKLSG) form a disordered region. Residues 10-20 (IRQKRHRRVRG) are compositionally biased toward basic residues.

This sequence belongs to the universal ribosomal protein uL18 family. In terms of assembly, part of the 50S ribosomal subunit; part of the 5S rRNA/L5/L18/L25 subcomplex. Contacts the 5S and 23S rRNAs.

In terms of biological role, this is one of the proteins that bind and probably mediate the attachment of the 5S RNA into the large ribosomal subunit, where it forms part of the central protuberance. The chain is Large ribosomal subunit protein uL18 from Streptococcus mutans serotype c (strain ATCC 700610 / UA159).